The primary structure comprises 336 residues: Atypical chemokine receptor 1 (336 aa).

The Extracellular segment spans residues 1–63; sequence MGNCLHTAEL…CNLLDDSALP (63 aa). Residues asparagine 16, asparagine 27, and asparagine 33 are each glycosylated (N-linked (GlcNAc...) asparagine). 2 disulfide bridges follow: cysteine 51–cysteine 276 and cysteine 129–cysteine 195. The chain crosses the membrane as a helical span at residues 64–84; it reads FFILTSVLGILASSTVLFILF. Over 85-95 the chain is Cytoplasmic; sequence RPLFRWQLCPG. Residues 96 to 116 form a helical membrane-spanning segment; it reads WPVLAQLAVGSALFSIVVPIL. The Extracellular segment spans residues 117–129; that stretch reads APGLGSTHSSALC. Residues 130-153 traverse the membrane as a helical segment; that stretch reads SLGYCVWYGSAFAQALLLGCHASL. Residues 154 to 166 are Cytoplasmic-facing; the sequence is GHRLGAGQVPGLT. A helical membrane pass occupies residues 167-187; that stretch reads LGLTVGIWGVAALLTLPVTLA. Residues 188–207 are Extracellular-facing; the sequence is SGASGGLCTPIHSTELKALQ. The helical transmembrane segment at 208 to 228 threads the bilayer; the sequence is ATHTVACLAIFVLLPLGLFGA. Over 229-244 the chain is Cytoplasmic; that stretch reads KGLKKALGMGPGPWMN. A helical transmembrane segment spans residues 245–265; sequence ILWAWFIFWWPHGVVLGLDFL. The Extracellular portion of the chain corresponds to 266-287; it reads VRSKLLLLSTCLAQQALDLLLN. Residues 288-308 form a helical membrane-spanning segment; it reads LAEALAILHCVATPLILALFY. The Cytoplasmic portion of the chain corresponds to 309 to 336; that stretch reads HQATRTLLPSLPLPEGWSSHLDTLGSKS.

Belongs to the G-protein coupled receptor 1 family. Atypical chemokine receptor subfamily.

It is found in the early endosome. The protein localises to the recycling endosome. It localises to the membrane. Atypical chemokine receptor that controls chemokine levels and localization via high-affinity chemokine binding that is uncoupled from classic ligand-driven signal transduction cascades, resulting instead in chemokine sequestration, degradation, or transcytosis. Also known as interceptor (internalizing receptor) or chemokine-scavenging receptor or chemokine decoy receptor. Has a promiscuous chemokine-binding profile, interacting with inflammatory chemokines of both the CXC and the CC subfamilies but not with homeostatic chemokines. Acts as a receptor for chemokines including CCL2, CCL5, CCL7, CCL11, CCL13, CCL14, CCL17, CXCL5, CXCL6, IL8/CXCL8, CXCL11, GRO, RANTES, MCP-1 and TARC. May regulate chemokine bioavailability and, consequently, leukocyte recruitment through two distinct mechanisms: when expressed in endothelial cells, it sustains the abluminal to luminal transcytosis of tissue-derived chemokines and their subsequent presentation to circulating leukocytes; when expressed in erythrocytes, serves as blood reservoir of cognate chemokines but also as a chemokine sink, buffering potential surges in plasma chemokine levels. This Gorilla gorilla gorilla (Western lowland gorilla) protein is Atypical chemokine receptor 1 (ACKR1).